A 518-amino-acid polypeptide reads, in one-letter code: Kelch repeat and BTB domain-containing protein 4 (518 aa).

Residues 45 to 112 (ADVTISVEGR…IYHGTVKLRA (68 aa)) enclose the BTB domain. The BACK domain maps to 147–239 (CLQVMWLADR…SLKEIGENVH (93 aa)). Kelch repeat units follow at residues 239–285 (HIYL…KHGG), 286–328 (DLYV…SVPG), 331–378 (AIYS…NLNG), 380–430 (IYLL…VHKD), and 432–481 (VFIV…VFRD).

As to quaternary structure, component of the BCR(KBTBD4) E3 ubiquitin ligase complex, at least composed of CUL3, KBTBD4 and RBX1.

In terms of biological role, substrate-specific adapter of a BCR (BTB-CUL3-RBX1) E3 ubiquitin ligase complex which targets CoREST corepressor complex components RCOR1, KDM1A/LSD1 and HDAC2 for proteasomal degradation. RCOR1 is likely to be the primary target while degradation of KDM1A and HDAC2 is likely due to their association with RCOR1. Also targets RCOR3, MIER2 and MIER3 for proteasomal degradation as well as associated proteins ZNF217 and RREB1. Degradation is dependent on the presence of an ELM2 domain in the target proteins. This chain is Kelch repeat and BTB domain-containing protein 4 (KBTBD4), found in Pongo abelii (Sumatran orangutan).